We begin with the raw amino-acid sequence, 147 residues long: Large ribosomal subunit protein uL11 (147 aa).

It belongs to the universal ribosomal protein uL11 family. Part of the ribosomal stalk of the 50S ribosomal subunit. Interacts with L10 and the large rRNA to form the base of the stalk. L10 forms an elongated spine to which L12 dimers bind in a sequential fashion forming a multimeric L10(L12)X complex. In terms of processing, one or more lysine residues are methylated.

Forms part of the ribosomal stalk which helps the ribosome interact with GTP-bound translation factors. This is Large ribosomal subunit protein uL11 from Metamycoplasma arthritidis (strain 158L3-1) (Mycoplasma arthritidis).